The sequence spans 413 residues: L-cysteine:1D-myo-inositol 2-amino-2-deoxy-alpha-D-glucopyranoside ligase (413 aa).

Cys-43 contributes to the Zn(2+) binding site. L-cysteinyl-5'-AMP is bound by residues 43–46, Thr-58, and 81–83; these read CGIT and NIT. Positions 45 to 55 match the 'HIGH' region motif; the sequence is ITPYDATHLGH. Residues 187–192 carry the 'ERGGDP' region motif; the sequence is ERGGDP. An L-cysteinyl-5'-AMP-binding site is contributed by Trp-227. Cys-231 contributes to the Zn(2+) binding site. L-cysteinyl-5'-AMP is bound at residue 249–251; the sequence is GND. His-256 contributes to the Zn(2+) binding site. Val-283 is a binding site for L-cysteinyl-5'-AMP. Residues 289–293 carry the 'KMSKS' region motif; sequence KMSKS.

Belongs to the class-I aminoacyl-tRNA synthetase family. MshC subfamily. In terms of assembly, monomer. The cofactor is Zn(2+).

It carries out the reaction 1D-myo-inositol 2-amino-2-deoxy-alpha-D-glucopyranoside + L-cysteine + ATP = 1D-myo-inositol 2-(L-cysteinylamino)-2-deoxy-alpha-D-glucopyranoside + AMP + diphosphate + H(+). Functionally, catalyzes the ATP-dependent condensation of GlcN-Ins and L-cysteine to form L-Cys-GlcN-Ins. The chain is L-cysteine:1D-myo-inositol 2-amino-2-deoxy-alpha-D-glucopyranoside ligase from Gordonia bronchialis (strain ATCC 25592 / DSM 43247 / BCRC 13721 / JCM 3198 / KCTC 3076 / NBRC 16047 / NCTC 10667) (Rhodococcus bronchialis).